A 151-amino-acid chain; its full sequence is Lipoprotein signal peptidase (151 aa).

A run of 2 helical transmembrane segments spans residues glycine 54–isoleucine 74 and leucine 83–leucine 103. Residues aspartate 110 and aspartate 125 contribute to the active site. Residues isoleucine 120–leucine 140 traverse the membrane as a helical segment.

It belongs to the peptidase A8 family.

It localises to the cell membrane. It carries out the reaction Release of signal peptides from bacterial membrane prolipoproteins. Hydrolyzes -Xaa-Yaa-Zaa-|-(S,diacylglyceryl)Cys-, in which Xaa is hydrophobic (preferably Leu), and Yaa (Ala or Ser) and Zaa (Gly or Ala) have small, neutral side chains.. The protein operates within protein modification; lipoprotein biosynthesis (signal peptide cleavage). Functionally, this protein specifically catalyzes the removal of signal peptides from prolipoproteins. In Shouchella clausii (strain KSM-K16) (Alkalihalobacillus clausii), this protein is Lipoprotein signal peptidase.